Here is a 202-residue protein sequence, read N- to C-terminus: Outer-membrane lipoprotein carrier protein (202 aa).

An N-terminal signal peptide occupies residues 1–18 (MNKLFLILLLIFSHEVFS).

This sequence belongs to the LolA family. In terms of assembly, monomer.

Its subcellular location is the periplasm. Participates in the translocation of lipoproteins from the inner membrane to the outer membrane. Only forms a complex with a lipoprotein if the residue after the N-terminal Cys is not an aspartate (The Asp acts as a targeting signal to indicate that the lipoprotein should stay in the inner membrane). This Legionella pneumophila (strain Corby) protein is Outer-membrane lipoprotein carrier protein.